A 135-amino-acid chain; its full sequence is uncharacterized protein (135 aa).

The next 2 helical transmembrane spans lie at 20–40 and 47–67; these read IFSF…NTKL and IAYF…IHGT.

This sequence belongs to the plectrovirus ORF5 family.

The protein resides in the host membrane. This is an uncharacterized protein from Spiroplasma virus SpV1-C74 (SpV1).